A 558-amino-acid polypeptide reads, in one-letter code: Nucleoprotein (558 aa).

Residues 54-237 (MRKERRDDKD…ITEQQSSINI (184 aa)) are binding site for the cap structure m7GTP. The Mn(2+) site is built by aspartate 382 and glutamate 384. Zn(2+) contacts are provided by glutamate 392, cysteine 499, histidine 502, and cysteine 518. A Mn(2+)-binding site is contributed by aspartate 522.

This sequence belongs to the arenaviridae nucleocapsid protein family. Homomultimerizes to form the nucleocapsid. Binds to viral genomic RNA. Interacts with glycoprotein G2. Interacts with protein Z; this interaction probably directs the encapsidated genome to budding sites. Interacts with protein L; this interaction does not interfere with Z-L interaction. Interacts with host IKBKE (via Protein kinase domain); the interaction inhibits IKBKE kinase activity.

It is found in the virion. Its subcellular location is the host cytoplasm. In terms of biological role, encapsidates the genome, protecting it from nucleases. The encapsidated genomic RNA is termed the nucleocapsid (NC). Serves as template for viral transcription and replication. The increased presence of protein N in host cell does not seem to trigger the switch from transcription to replication as observed in other negative strain RNA viruses. Through the interaction with host IKBKE, strongly inhibits the phosphorylation and nuclear translocation of host IRF3, a protein involved in interferon activation pathway, leading to the inhibition of interferon-beta and IRF3-dependent promoters activation. Also encodes a functional 3'-5' exoribonuclease that degrades preferentially dsRNA substrates and thereby participates in the suppression of interferon induction. The polypeptide is Nucleoprotein (Lymphocytic choriomeningitis virus (strain WE) (LCMV)).